We begin with the raw amino-acid sequence, 241 residues long: Phosphatidylcholine synthase (241 aa).

Over 1-15 the chain is Cytoplasmic; sequence MKFFNYRRVPYAEIR. A helical membrane pass occupies residues 16-36; it reads AFSVHILTASGSFLAFLGVVA. Residues 37–41 lie on the Periplasmic side of the membrane; that stretch reads AAEHR. A helical membrane pass occupies residues 42 to 62; the sequence is FVDMFWWLGLALLVDGIDGPI. At 63 to 76 the chain is on the cytoplasmic side; the sequence is ARKVQVKEVLPNWS. A helical transmembrane segment spans residues 77–97; it reads GDTLDNVIDYVTYVLLPAFAL. Topologically, residues 98-100 are periplasmic; it reads YQS. The helical transmembrane segment at 101-121 threads the bilayer; the sequence is GMIGEPWSFVAAGAIVVSSAI. Residues 122 to 133 are Cytoplasmic-facing; it reads YYADMGMKTDEY. A helical membrane pass occupies residues 134 to 154; it reads FFSGFPVVWNMVVFTLFVIQA. Residues 155–156 lie on the Periplasmic side of the membrane; it reads SE. Residues 157–177 traverse the membrane as a helical segment; it reads VTASIVVFLSVILTFLPINFL. The Cytoplasmic portion of the chain corresponds to 178–187; that stretch reads HPVRVKRLRP. A helical transmembrane segment spans residues 188–208; it reads LNLGIFLVWSVLGMYALLLHF. Topologically, residues 209–211 are periplasmic; that stretch reads ETP. Residues 212 to 232 form a helical membrane-spanning segment; that stretch reads PWVVVGVVATGLYLYVIGFIL. Topologically, residues 233-241 are cytoplasmic; that stretch reads QIFPKLGRA.

Belongs to the CDP-alcohol phosphatidyltransferase class-I family. Mn(2+) serves as cofactor.

Its subcellular location is the cell inner membrane. The enzyme catalyses a CDP-1,2-diacyl-sn-glycerol + choline = a 1,2-diacyl-sn-glycero-3-phosphocholine + CMP + H(+). Activated by CDP-diacylglycerol especially in the presence of Triton X-100 (0.1% w/v) at concentrations where micelles are formed. Maximal activation by Triton X-100 at 0.2% w/v, but higher concentrations become inhibitory. Inhibited by EDTA and high concentrations of choline. Condenses choline with CDP-diglyceride to produce phosphatidylcholine and CMP. In Rhizobium meliloti (strain 1021) (Ensifer meliloti), this protein is Phosphatidylcholine synthase (pcs).